The primary structure comprises 440 residues: Protein root UVB sensitive 3 (440 aa).

The next 3 helical transmembrane spans lie at 109 to 129 (IGATFQWFLRDFTGMLGGILF), 154 to 174 (IGMLMDLLSPLFPSAFIVVVC), and 232 to 252 (FTSGNPMAIWLSFLSLTVFHM).

Belongs to the RUS1 family.

The protein resides in the membrane. The protein is Protein root UVB sensitive 3 of Arabidopsis thaliana (Mouse-ear cress).